A 434-amino-acid polypeptide reads, in one-letter code: Gamma-glutamyl phosphate reductase (434 aa).

Belongs to the gamma-glutamyl phosphate reductase family.

It is found in the cytoplasm. It catalyses the reaction L-glutamate 5-semialdehyde + phosphate + NADP(+) = L-glutamyl 5-phosphate + NADPH + H(+). Its pathway is amino-acid biosynthesis; L-proline biosynthesis; L-glutamate 5-semialdehyde from L-glutamate: step 2/2. Catalyzes the NADPH-dependent reduction of L-glutamate 5-phosphate into L-glutamate 5-semialdehyde and phosphate. The product spontaneously undergoes cyclization to form 1-pyrroline-5-carboxylate. The protein is Gamma-glutamyl phosphate reductase of Rhodopirellula baltica (strain DSM 10527 / NCIMB 13988 / SH1).